We begin with the raw amino-acid sequence, 553 residues long: Transcriptional regulator HilA (553 aa).

Positions Asn11–Arg107 form a DNA-binding region, ompR/PhoB-type. Position 62 is a 4-aspartylphosphate (Asp62). A TPR repeat occupies Ala372–Arg405.

Functionally, the main transcriptional regulator of the Salmonella pathogenicity island 1 (SPI1) gene expression. Activates the expression of invasion genes by a direct action at their promoters and also indirectly by increasing the level of invF. Also binds upstream of prgH and directly activates the expression of prgHIJK operon. In Salmonella typhi, this protein is Transcriptional regulator HilA (hilA).